We begin with the raw amino-acid sequence, 278 residues long: MAIIKYKPTTNGRRNMTSSDFAEITKKKPEKTLLESQSHTAGRNSYGHITVRHRGGGHKQKYRIIDFKRNKDDVKAVVKAIEYDPNRTANIALLHYTDGIKAYILAPKDLKVGTVVESGPNADIKPGNALPLSAIPAGTEIHNIELKPGKGGQLVRSAGTVAQVLGNDGKYTLVRLQSGEVRKILSTCRATIGSVGNEQHSLIQLGKAGRKRWLGKRPQSRGSVMNPNDHPHGGGEGKAPVGRPQPMTPWGKKSRGIKTRNSKARSEKLIIRHRKGNK.

2 stretches are compositionally biased toward basic residues: residues 210 to 219 and 252 to 263; these read RKRWLGKRPQ and KKSRGIKTRNSK. Positions 210-278 are disordered; the sequence is RKRWLGKRPQ…LIIRHRKGNK (69 aa).

The protein belongs to the universal ribosomal protein uL2 family. As to quaternary structure, part of the 50S ribosomal subunit. Forms a bridge to the 30S subunit in the 70S ribosome.

Functionally, one of the primary rRNA binding proteins. Required for association of the 30S and 50S subunits to form the 70S ribosome, for tRNA binding and peptide bond formation. It has been suggested to have peptidyltransferase activity; this is somewhat controversial. Makes several contacts with the 16S rRNA in the 70S ribosome. The sequence is that of Large ribosomal subunit protein uL2 from Lactobacillus gasseri (strain ATCC 33323 / DSM 20243 / BCRC 14619 / CIP 102991 / JCM 1131 / KCTC 3163 / NCIMB 11718 / NCTC 13722 / AM63).